We begin with the raw amino-acid sequence, 549 residues long: Glucose-6-phosphate isomerase (549 aa).

Lys-80, Lys-228, and Lys-234 each carry N6-acetyllysine. Glu-355 serves as the catalytic Proton donor. Active-site residues include His-386 and Lys-514.

Belongs to the GPI family.

The protein localises to the cytoplasm. It catalyses the reaction alpha-D-glucose 6-phosphate = beta-D-fructose 6-phosphate. It functions in the pathway carbohydrate biosynthesis; gluconeogenesis. It participates in carbohydrate degradation; glycolysis; D-glyceraldehyde 3-phosphate and glycerone phosphate from D-glucose: step 2/4. Its function is as follows. Catalyzes the reversible isomerization of glucose-6-phosphate to fructose-6-phosphate. This Shigella flexneri serotype 5b (strain 8401) protein is Glucose-6-phosphate isomerase.